The sequence spans 326 residues: Thioredoxin reductase (326 aa).

FAD is bound at residue 40–47 (TGNNKGGQ). C141 and C144 form a disulfide bridge. Residue 291-300 (DVIDHVYKQA) participates in FAD binding.

The protein belongs to the class-II pyridine nucleotide-disulfide oxidoreductase family. In terms of assembly, homodimer. FAD is required as a cofactor.

Its subcellular location is the cytoplasm. The catalysed reaction is [thioredoxin]-dithiol + NADP(+) = [thioredoxin]-disulfide + NADPH + H(+). This is Thioredoxin reductase (trxB) from Buchnera aphidicola subsp. Baizongia pistaciae (strain Bp).